Consider the following 448-residue polypeptide: Argininosuccinate synthase (448 aa).

ATP-binding positions include 17-25 (AFSGGLDTS) and Ala43. Tyr99 contacts L-citrulline. ATP contacts are provided by Gly129 and Thr131. 3 residues coordinate L-aspartate: Thr131, Asn135, and Asp136. An L-citrulline-binding site is contributed by Asn135. Position 136 (Asp136) interacts with ATP. L-citrulline-binding residues include Arg139 and Ser192. Position 194 (Asp194) interacts with ATP. Residues Thr201, Glu203, and Glu280 each contribute to the L-citrulline site.

It belongs to the argininosuccinate synthase family. Type 2 subfamily. In terms of assembly, homotetramer.

The protein localises to the cytoplasm. The catalysed reaction is L-citrulline + L-aspartate + ATP = 2-(N(omega)-L-arginino)succinate + AMP + diphosphate + H(+). The protein operates within amino-acid biosynthesis; L-arginine biosynthesis; L-arginine from L-ornithine and carbamoyl phosphate: step 2/3. This is Argininosuccinate synthase from Pectobacterium carotovorum subsp. carotovorum (strain PC1).